Consider the following 395-residue polypeptide: Imidazolonepropionase (395 aa).

Histidine 72 and histidine 74 together coordinate Fe(3+). Zn(2+) is bound by residues histidine 72 and histidine 74. The 4-imidazolone-5-propanoate site is built by arginine 81, tyrosine 144, and histidine 174. N-formimidoyl-L-glutamate is bound at residue tyrosine 144. Histidine 231 is a binding site for Fe(3+). Histidine 231 lines the Zn(2+) pocket. Glutamate 234 serves as a coordination point for 4-imidazolone-5-propanoate. Aspartate 306 serves as a coordination point for Fe(3+). Position 306 (aspartate 306) interacts with Zn(2+).

The protein belongs to the metallo-dependent hydrolases superfamily. HutI family. Zn(2+) serves as cofactor. Requires Fe(3+) as cofactor.

Its subcellular location is the cytoplasm. It carries out the reaction 4-imidazolone-5-propanoate + H2O = N-formimidoyl-L-glutamate. Its pathway is amino-acid degradation; L-histidine degradation into L-glutamate; N-formimidoyl-L-glutamate from L-histidine: step 3/3. Functionally, catalyzes the hydrolytic cleavage of the carbon-nitrogen bond in imidazolone-5-propanoate to yield N-formimidoyl-L-glutamate. It is the third step in the universal histidine degradation pathway. The polypeptide is Imidazolonepropionase (Pyrobaculum arsenaticum (strain DSM 13514 / JCM 11321 / PZ6)).